Consider the following 314-residue polypeptide: Dihydroorotate dehydrogenase (fumarate) (314 aa).

Substrate is bound by residues Lys-46, 70 to 74 (NSMGL), and Asn-130. Residue 46–47 (KS) participates in FMN binding. Residue Asn-130 coordinates FMN. Active-site nucleophile residues include Ser-132 and Cys-133. FMN-binding residues include Lys-167 and Ile-195. 196 to 197 (NS) contributes to the substrate binding site. FMN contacts are provided by residues Gly-224, 252 to 253 (GG), and 274 to 275 (GT).

It belongs to the dihydroorotate dehydrogenase family. Type 1 subfamily. As to quaternary structure, homodimer. FMN serves as cofactor.

It localises to the cytoplasm. It carries out the reaction (S)-dihydroorotate + fumarate = orotate + succinate. The protein operates within pyrimidine metabolism; UMP biosynthesis via de novo pathway. Functionally, catalyzes the conversion of dihydroorotate to orotate with fumarate as the electron acceptor. The polypeptide is Dihydroorotate dehydrogenase (fumarate) (URA1) (Saccharomyces bayanus (Yeast)).